We begin with the raw amino-acid sequence, 89 residues long: Probable Fe(2+)-trafficking protein (89 aa).

This sequence belongs to the Fe(2+)-trafficking protein family.

In terms of biological role, could be a mediator in iron transactions between iron acquisition and iron-requiring processes, such as synthesis and/or repair of Fe-S clusters in biosynthetic enzymes. This chain is Probable Fe(2+)-trafficking protein, found in Stenotrophomonas maltophilia (strain K279a).